A 552-amino-acid polypeptide reads, in one-letter code: Chaperonin GroEL (552 aa).

ATP-binding positions include 30 to 33 (TLGP), Lys-51, 87 to 91 (DGTTT), Gly-415, 479 to 481 (NAA), and Asp-495.

Belongs to the chaperonin (HSP60) family. In terms of assembly, forms a cylinder of 14 subunits composed of two heptameric rings stacked back-to-back. Interacts with the co-chaperonin GroES.

It is found in the cytoplasm. It carries out the reaction ATP + H2O + a folded polypeptide = ADP + phosphate + an unfolded polypeptide.. Functionally, together with its co-chaperonin GroES, plays an essential role in assisting protein folding. The GroEL-GroES system forms a nano-cage that allows encapsulation of the non-native substrate proteins and provides a physical environment optimized to promote and accelerate protein folding. This chain is Chaperonin GroEL, found in Stutzerimonas stutzeri (Pseudomonas stutzeri).